The primary structure comprises 345 residues: Leucine-rich repeat-containing protein 69 (345 aa).

10 LRR repeats span residues 13–34 (KAKT…VGCL), 36–58 (SLTE…SALC), 59–80 (RLRV…IKYL), 82–103 (CLER…ALDG), 106–127 (NLLF…IYKL), 129–151 (SLET…CFLQ), 152–173 (NLQE…LSYL), 175–196 (NLKE…ICKL), 198–219 (KLKI…MHRV), and 220–241 (PLTE…FARQ).

It belongs to the LRRC69 family.

The chain is Leucine-rich repeat-containing protein 69 (lrrc69) from Xenopus laevis (African clawed frog).